Reading from the N-terminus, the 460-residue chain is Probable asparagine--tRNA ligase, mitochondrial (460 aa).

It belongs to the class-II aminoacyl-tRNA synthetase family.

Its subcellular location is the mitochondrion matrix. The enzyme catalyses tRNA(Asn) + L-asparagine + ATP = L-asparaginyl-tRNA(Asn) + AMP + diphosphate + H(+). In Dictyostelium discoideum (Social amoeba), this protein is Probable asparagine--tRNA ligase, mitochondrial (asnS2).